A 511-amino-acid polypeptide reads, in one-letter code: MVVGILIGIIILGVVGFIQYTLIEKASKNRVESLEKEASLALEEAKREAESTKKEAILEAKEEVHKLRSDLDKEIRDRRNEIQRFERRLIQREESLDKKGEMLEKREDSINKKSIEIQELEERVQSLYGEQRAELERISNLSSEDARTLLLDEVRREIKHESAMLIKELETKAKEEADKKSREIITNAIQRCAADHVSETTVHVVALPNDEMKGRIIGREGRNIRTLETLTGVDLIIDDTPEAVILSSFDPIRREVARIALEKLIVDGRIHPARIEEMVERAIKDVENDIKEEGEQATFETGVHGLHPEIIKLLGRLKYRTSYGQNVLKHSIEVSYLAGLMASELGLDVNLARRAGLLHDIGKGVDQEYEGPHAVIGGELAKKYHESPAVVNAIAAHHGDTEMQTLEAVLVQAADAISAARPGARRETLEAYIKRLEKLEEIATSYEGVEKSYAIQAGREIRIMVKPDQVDDAGAIEMARNIVKKIEEQLEYPGQIKINVIRETRAVDYAK.

Residues valine 3–isoleucine 23 form a helical membrane-spanning segment. Residues threonine 201–valine 286 form the KH domain. The HD domain maps to valine 327 to alanine 420.

Belongs to the RNase Y family.

It is found in the cell membrane. In terms of biological role, endoribonuclease that initiates mRNA decay. This is Ribonuclease Y from Clostridium perfringens (strain SM101 / Type A).